The chain runs to 382 residues: ATP phosphoribosyltransferase regulatory subunit (382 aa).

It belongs to the class-II aminoacyl-tRNA synthetase family. HisZ subfamily. In terms of assembly, heteromultimer composed of HisG and HisZ subunits.

It localises to the cytoplasm. It functions in the pathway amino-acid biosynthesis; L-histidine biosynthesis; L-histidine from 5-phospho-alpha-D-ribose 1-diphosphate: step 1/9. Required for the first step of histidine biosynthesis. May allow the feedback regulation of ATP phosphoribosyltransferase activity by histidine. This is ATP phosphoribosyltransferase regulatory subunit from Verminephrobacter eiseniae (strain EF01-2).